The chain runs to 468 residues: A-type ATP synthase subunit B (468 aa).

The protein belongs to the ATPase alpha/beta chains family. Has multiple subunits with at least A(3), B(3), C, D, E, F, H, I and proteolipid K(x).

The protein localises to the cell membrane. Functionally, component of the A-type ATP synthase that produces ATP from ADP in the presence of a proton gradient across the membrane. The B chain is a regulatory subunit. The protein is A-type ATP synthase subunit B of Haloferax volcanii (strain ATCC 29605 / DSM 3757 / JCM 8879 / NBRC 14742 / NCIMB 2012 / VKM B-1768 / DS2) (Halobacterium volcanii).